Consider the following 448-residue polypeptide: Divalent metal cation transporter MntH (448 aa).

The span at 1–10 (MKKDKTERTK) shows a compositional bias: basic and acidic residues. The disordered stretch occupies residues 1–20 (MKKDKTERTKQSWRKAQNAP). 11 consecutive transmembrane segments (helical) span residues 41–61 (LFAF…PGNW), 69–89 (SEFG…AVLL), 117–137 (GFVL…AEVI), 147–167 (FGIP…LVLF), 176–196 (IEVI…AEMV), 215–235 (IVTN…TVMP), 270–290 (FSLT…AAAF), 307–327 (LLNP…ALLA), 363–383 (VLAI…GINE), 384–404 (LLIF…IPLV), and 424–444 (IISW…LFYT).

Belongs to the NRAMP family.

The protein resides in the cell membrane. Its function is as follows. H(+)-stimulated, divalent metal cation uptake system. This Listeria monocytogenes serotype 4b (strain CLIP80459) protein is Divalent metal cation transporter MntH.